An 845-amino-acid polypeptide reads, in one-letter code: MIIATSLRSQTFCTWRAWRAVHSTAVRLESKLNEVPIDRTRNIGIIAHIDAGKTTTTERMLYYSGKTKRIGNVDEGDTVTDYLPSERQRGITIQSAAISIPWNNHKINIIDTPGHADFTFEVTRSLRVLDGAVTILDGVAGVEAQTEKVWKQATSLNIPKIAYVNKMDRPGAGFSRTVMEIIEKLQTRVVLCNVPYFENSKDNDPVFCGVADILHVKLLKWNPEIDPHGKNITVIDIEAERDTYPEVYETVVKSRESMVETLGEFDEAIIDSFLESNEDYMNIPINVLNEAIRKATLENYLTPVYCGSSFRNIGVQPLMDGVVKYLPSPLQISVPEITSSATKNVKIKHVKAKQAVKQDMEVTTKMNNRTGLVVNANPNLTLALAFKVMTHATRGVMTFFRVYSGKLVSNSIITNTTTGKKLHVKKLFMMHGDEPEEVKHISSGNIGVITGHEDDIQTGDTLVSHSHLKKGFSEMESNLKLLPIEIPPPLFNSAIEPQTAGDEAYMKECVRILTREDPSLKVSVDEEMGQTIISGMGELHLDIVKERLVRDMKAKVTLRDVAVSYKETLLNPGSSYKQTSESGSVSIEIEMDSFEGAAEESSFFEENGAMIIAEDNNIIIIEPSAISQNMLKALEERRWKSTYSLEDLQEIVIQGCLTALQMGGPIFGLSLHSTVIRVKSWDFPVADSSVASTVLLDVSRSAVTSYIATNRDWFGILEPIMETRVYIDSDIMGEVSHDLTQRCQAVIKSIEDESTQDVDALAWAKDEAEKTFLPPDYTMKAGKDAISYKNKKIIIAETPLREMIGYLSRLRSITQGRGTFDMTYIGMRRAIKSRFDAISKEFNFM.

The transit peptide at 1-28 (MIIATSLRSQTFCTWRAWRAVHSTAVRL) directs the protein to the mitochondrion. One can recognise a tr-type G domain in the interval 38–330 (DRTRNIGIIA…GVVKYLPSPL (293 aa)). GTP contacts are provided by residues 47 to 54 (AHIDAGKT), 111 to 115 (DTPGH), and 165 to 168 (NKMD).

Belongs to the TRAFAC class translation factor GTPase superfamily. Classic translation factor GTPase family. EF-G/EF-2 subfamily.

It is found in the mitochondrion. Its function is as follows. Mitochondrial GTPase that mediates the disassembly of ribosomes from messenger RNA at the termination of mitochondrial protein biosynthesis. Not involved in the GTP-dependent ribosomal translocation step during translation elongation. The sequence is that of Ribosome-releasing factor 2, mitochondrial from Scheffersomyces stipitis (strain ATCC 58785 / CBS 6054 / NBRC 10063 / NRRL Y-11545) (Yeast).